We begin with the raw amino-acid sequence, 387 residues long: Acetylornithine aminotransferase (387 aa).

Residues 97-98 (GT) and F130 each bind pyridoxal 5'-phosphate. R133 is a binding site for N(2)-acetyl-L-ornithine. A pyridoxal 5'-phosphate-binding site is contributed by 215–218 (DEVQ). The residue at position 244 (K244) is an N6-(pyridoxal phosphate)lysine. T273 contacts pyridoxal 5'-phosphate.

Belongs to the class-III pyridoxal-phosphate-dependent aminotransferase family. ArgD subfamily. In terms of assembly, homodimer. It depends on pyridoxal 5'-phosphate as a cofactor.

It is found in the cytoplasm. It carries out the reaction N(2)-acetyl-L-ornithine + 2-oxoglutarate = N-acetyl-L-glutamate 5-semialdehyde + L-glutamate. It functions in the pathway amino-acid biosynthesis; L-arginine biosynthesis; N(2)-acetyl-L-ornithine from L-glutamate: step 4/4. The chain is Acetylornithine aminotransferase from Clostridium acetobutylicum (strain ATCC 824 / DSM 792 / JCM 1419 / IAM 19013 / LMG 5710 / NBRC 13948 / NRRL B-527 / VKM B-1787 / 2291 / W).